Reading from the N-terminus, the 84-residue chain is U8-theraphotoxin-Hhn1d (84 aa).

Residues 1-21 form the signal peptide; the sequence is MKVVLIVCLVWVMAMMELVSC. 5 disulfides stabilise this stretch: Cys-23-Cys-35, Cys-29-Cys-44, Cys-34-Cys-67, Cys-54-Cys-75, and Cys-69-Cys-81.

Belongs to the AVIT (prokineticin) family. In terms of tissue distribution, expressed by the venom gland.

It localises to the secreted. The sequence is that of U8-theraphotoxin-Hhn1d from Cyriopagopus hainanus (Chinese bird spider).